We begin with the raw amino-acid sequence, 381 residues long: GDP-mannose-dependent monoacylated alpha-(1-6)-phosphatidylinositol monomannoside mannosyltransferase (381 aa).

Positions 206, 211, 261, and 298 each coordinate GDP-alpha-D-mannose.

Belongs to the glycosyltransferase group 1 family. Glycosyltransferase 4 subfamily.

It carries out the reaction a 1,2-diacyl-sn-glycero-3-phospho-[alpha-D-mannopyranosyl-(1&lt;-&gt;6)-D-myo-inositol] + GDP-alpha-D-mannose = a 2,6-O-bis(alpha-D-mannopyranosyl)-1-phosphatidyl-1D-myo-inositol + GDP + H(+). It catalyses the reaction a 1,2-diacyl-sn-glycero-3-phospho-[alpha-D-6-acyl-mannopyranosyl-(1&lt;-&gt;6)-D-myo-inositol] + GDP-alpha-D-mannose = a 2-O-(alpha-D-mannosyl)-6-O-(6-O-acyl-alpha-D-mannosyl)-1-phosphatidyl-1D-myo-inositol + GDP + H(+). It functions in the pathway phospholipid metabolism; phosphatidylinositol metabolism. Functionally, involved in the biosynthesis of phosphatidyl-myo-inositol mannosides (PIM) which are early precursors in the biosynthesis of lipomannans (LM) and lipoarabinomannans (LAM). Catalyzes the addition of a mannosyl residue from GDP-D-mannose (GDP-Man) to the position 6 of a phosphatidyl-myo-inositol bearing an alpha-1,2-linked mannose residue (PIM1) to generate phosphatidyl-myo-inositol bearing alpha-1,2- and alpha-1,6-linked mannose residues (Ac1PIM2). PimB also catalyzes the addition of a mannosyl residue from GDP-Man to the position 6 of phosphatidyl-myo-inositol bearing an acylated alpha-1,2-linked mannose residue (Ac1PIM1) to generate monoacylated phosphatidyl-myo-inositol bearing alpha-1,2- and alpha-1,6-linked mannose residues (Ac1PIM2). The addition of the second mannosyl residue by PimB preferentially occurs before the acylation of the mannosyl residue transferred by PimA. Also able to transfer a mannosyl residue from GDP-Man to the position 6 of a phosphatidyl-myo-inositol (PI), but this reaction is very slow. The chain is GDP-mannose-dependent monoacylated alpha-(1-6)-phosphatidylinositol monomannoside mannosyltransferase from Corynebacterium glutamicum (strain ATCC 13032 / DSM 20300 / JCM 1318 / BCRC 11384 / CCUG 27702 / LMG 3730 / NBRC 12168 / NCIMB 10025 / NRRL B-2784 / 534).